Reading from the N-terminus, the 37-residue chain is Large ribosomal subunit protein bL36c (37 aa).

It belongs to the bacterial ribosomal protein bL36 family.

It localises to the plastid. The protein resides in the chloroplast. In Lotus japonicus (Lotus corniculatus var. japonicus), this protein is Large ribosomal subunit protein bL36c.